Reading from the N-terminus, the 588-residue chain is MLRSWIGSGTLRSLCARRLTRSSLPSPKASFSSAPNRYLQPPTSADRVPLRKQLKQEAKALRSHKKQRKETEEASRQEWELTVGVEIHAQLDTEAKLFSRAPTSTSETPNSNVALFDLAFPGSQPEFQIATLLPALRAAIALNCEIQPVSRFDRKHYFYQDQPAGYQITQYYEPFARNGYVDLFDYDGIAPEDGERVRIDIKQLQLEQDTAKSQEYPPSTQLLDFNRVSHPLIEIITMPQIHTPATAAACVRKLQAIVQSCGAVTTGMEMGGLRADVNVSVRRRGEAAGQHQYDGITGLGQRTEIKNLSSFKAVEDAIIAEKNRQIEVLESGGVIEGETRGWAIGSTETRRLRGKEGSVDYRYMPDPDIPPLIIGEDLLSRLRESLPTAPDALLTLLVGSEFNLPIEDAKPLIELDDGARLEYYHDVVDILRSLQVDRDDKTRAGLARVASNWVLHELGGLLTKADQAWDAEVVPTRSLAHLIDHLQRKLITGPTAKQVLATIFDGDHRPVPQLLEEENLLLRPLSREEYIALAESVIALNPQMVEQIRSKNQLGKLGWFVGQMMRTGEKGRVEAPKAEEILRELILG.

The N-terminal 109 residues, 1-109, are a transit peptide targeting the mitochondrion; that stretch reads MLRSWIGSGT…RAPTSTSETP (109 aa). Residues 22-35 are compositionally biased toward low complexity; the sequence is SSLPSPKASFSSAP. The segment at 22–50 is disordered; sequence SSLPSPKASFSSAPNRYLQPPTSADRVPL.

It belongs to the GatB/GatE family. GatB subfamily. In terms of assembly, subunit of the heterotrimeric GatCAB amidotransferase (AdT) complex, composed of A, B and C subunits.

It is found in the mitochondrion. The enzyme catalyses L-glutamyl-tRNA(Gln) + L-glutamine + ATP + H2O = L-glutaminyl-tRNA(Gln) + L-glutamate + ADP + phosphate + H(+). Its function is as follows. Allows the formation of correctly charged Gln-tRNA(Gln) through the transamidation of misacylated Glu-tRNA(Gln) in the mitochondria. The reaction takes place in the presence of glutamine and ATP through an activated gamma-phospho-Glu-tRNA(Gln). The protein is Glutamyl-tRNA(Gln) amidotransferase subunit B, mitochondrial of Penicillium rubens (strain ATCC 28089 / DSM 1075 / NRRL 1951 / Wisconsin 54-1255) (Penicillium chrysogenum).